The following is a 71-amino-acid chain: Small ribosomal subunit protein eS17 (71 aa).

The protein belongs to the eukaryotic ribosomal protein eS17 family.

The chain is Small ribosomal subunit protein eS17 from Pyrobaculum neutrophilum (strain DSM 2338 / JCM 9278 / NBRC 100436 / V24Sta) (Thermoproteus neutrophilus).